The following is a 464-amino-acid chain: Anthranilate synthase component 1 (464 aa).

Residues Ser41 and Pro236–Met238 each bind L-tryptophan. Gly271–Thr272 contributes to the chorismate binding site. Glu298 lines the Mg(2+) pocket. Chorismate-binding positions include Tyr386, Arg406, Gly420–Gly422, and Gly422. A Mg(2+)-binding site is contributed by Glu435.

It belongs to the anthranilate synthase component I family. In terms of assembly, heterotetramer consisting of two non-identical subunits: a beta subunit (TrpG) and a large alpha subunit (TrpE). The cofactor is Mg(2+).

It carries out the reaction chorismate + L-glutamine = anthranilate + pyruvate + L-glutamate + H(+). It functions in the pathway amino-acid biosynthesis; L-tryptophan biosynthesis; L-tryptophan from chorismate: step 1/5. Its activity is regulated as follows. Feedback inhibited by tryptophan. Part of a heterotetrameric complex that catalyzes the two-step biosynthesis of anthranilate, an intermediate in the biosynthesis of L-tryptophan. In the first step, the glutamine-binding beta subunit (TrpG) of anthranilate synthase (AS) provides the glutamine amidotransferase activity which generates ammonia as a substrate that, along with chorismate, is used in the second step, catalyzed by the large alpha subunit of AS (TrpE) to produce anthranilate. In the absence of TrpG, TrpE can synthesize anthranilate directly from chorismate and high concentrations of ammonia. This chain is Anthranilate synthase component 1 (trpE), found in Methanothermobacter thermautotrophicus (strain ATCC 29096 / DSM 1053 / JCM 10044 / NBRC 100330 / Delta H) (Methanobacterium thermoautotrophicum).